Here is a 617-residue protein sequence, read N- to C-terminus: MTMGALGVVYGDIGTSPLYALKEAAKAAAHGATVTPDAVLGVASLILWALLLIISLKYALLILRADNRGEGGIVALLALLHARNAQPGTWRSHLLVVGLVGAALLYGDGAITPAISVLSAIEGLKVDAPSLAPAVVPVTVVILVGLFMMQKQGTGFIGRIFGPVMLAWFAVLAALGIHGIVKAPAVLAALSPLYAVEFLIHQDFHVSFAILGAAFLAVTGGEAMYADMGHFGRLPIRLAWFAICLPALVLNYFGQAALLITDPAMIENPFFQLCPDALHYPLVAFSAVATVIASQAIISGVFSLTQQSIQLGFLPRMQIRHTTSDAIGQIYVPLVNWLLAAATLGAVLSFGSSDALAGAYGIAVSLLMAITTLLAALVAIQWGYSPWLVVAVNGAFFVIDVIFFSANSIKLFEGGWFPLLLAALVAFMMLTWRSGVKLVEAARAKLRQPEEDLIETAVNKCSARLPGTAVFLASAPRGVPLALTQFVKHNRVLHERVLLVTVLIEESPHIPDEERAEVIEIIPGITRVILHYGFMQNPTIFDGLTLTCRQGKLPGIDLSDITYYVGRETIIPREDVPGMWVWREGLFAFLQRNAERSAAFFGVPTKQVVEFGTELEI.

11 helical membrane-spanning segments follow: residues 42 to 62 (VASL…ALLI), 95 to 115 (LVVG…TPAI), 129 to 149 (PSLA…LFMM), 160 to 180 (IFGP…IHGI), 206 to 226 (VSFA…AMYA), 240 to 260 (WFAI…ALLI), 282 to 302 (LVAF…SGVF), 330 to 350 (IYVP…VLSF), 360 to 380 (YGIA…LVAI), 386 to 406 (PWLV…FFSA), and 411 to 431 (LFEG…MMLT).

It belongs to the HAK/KUP transporter (TC 2.A.72) family.

It localises to the cell inner membrane. The catalysed reaction is K(+)(in) + H(+)(in) = K(+)(out) + H(+)(out). Its function is as follows. Transport of potassium into the cell. Likely operates as a K(+):H(+) symporter. This chain is Probable potassium transport system protein Kup 3, found in Bradyrhizobium diazoefficiens (strain JCM 10833 / BCRC 13528 / IAM 13628 / NBRC 14792 / USDA 110).